Reading from the N-terminus, the 389-residue chain is Transcription factor MYB97 (389 aa).

HTH myb-type domains follow at residues G16–L68 and R69–Q123. 2 consecutive DNA-binding regions (H-T-H motif) follow at residues W44–L68 and W96–L119. A disordered region spans residues P131–S159. The segment covering Q140–S159 has biased composition (low complexity).

Accumulates in pollen grains and pollen tube. Mostly expressed in mature pollen grains, and, to a lower extent, in inflorescences and siliques.

It localises to the nucleus. In terms of biological role, transcription activator. Binds to 5'-CAACTGTC-3' and/or 5'-TAACAAA-3' motif in target gene promoter to promote their expression. Together with MYB101 and MYB120, functions as a male factor that controls pollen tube-synergid interaction in fertilization. Required for pollen tube growth arrest and sperm cell release in the female gametophyte, probably via the regulation of pollen tube-specific gene expression. The polypeptide is Transcription factor MYB97 (Arabidopsis thaliana (Mouse-ear cress)).